Reading from the N-terminus, the 222-residue chain is Glycerol-3-phosphate acyltransferase (222 aa).

6 consecutive transmembrane segments (helical) span residues 4 to 24 (ALLL…IPTG), 56 to 76 (PAAI…VALV), 87 to 107 (ALPA…VVLG), 130 to 150 (FMLN…VIFF), 153 to 173 (IVSL…LALQ), and 174 to 191 (LPPP…YVIV).

It belongs to the PlsY family. As to quaternary structure, probably interacts with PlsX.

The protein localises to the cell inner membrane. The catalysed reaction is an acyl phosphate + sn-glycerol 3-phosphate = a 1-acyl-sn-glycero-3-phosphate + phosphate. It functions in the pathway lipid metabolism; phospholipid metabolism. Its function is as follows. Catalyzes the transfer of an acyl group from acyl-phosphate (acyl-PO(4)) to glycerol-3-phosphate (G3P) to form lysophosphatidic acid (LPA). This enzyme utilizes acyl-phosphate as fatty acyl donor, but not acyl-CoA or acyl-ACP. This chain is Glycerol-3-phosphate acyltransferase, found in Synechocystis sp. (strain ATCC 27184 / PCC 6803 / Kazusa).